The primary structure comprises 250 residues: Leucyl/phenylalanyl-tRNA--protein transferase (250 aa).

It belongs to the L/F-transferase family.

The protein resides in the cytoplasm. The enzyme catalyses N-terminal L-lysyl-[protein] + L-leucyl-tRNA(Leu) = N-terminal L-leucyl-L-lysyl-[protein] + tRNA(Leu) + H(+). The catalysed reaction is N-terminal L-arginyl-[protein] + L-leucyl-tRNA(Leu) = N-terminal L-leucyl-L-arginyl-[protein] + tRNA(Leu) + H(+). It carries out the reaction L-phenylalanyl-tRNA(Phe) + an N-terminal L-alpha-aminoacyl-[protein] = an N-terminal L-phenylalanyl-L-alpha-aminoacyl-[protein] + tRNA(Phe). Its function is as follows. Functions in the N-end rule pathway of protein degradation where it conjugates Leu, Phe and, less efficiently, Met from aminoacyl-tRNAs to the N-termini of proteins containing an N-terminal arginine or lysine. The protein is Leucyl/phenylalanyl-tRNA--protein transferase of Cupriavidus necator (strain ATCC 17699 / DSM 428 / KCTC 22496 / NCIMB 10442 / H16 / Stanier 337) (Ralstonia eutropha).